A 452-amino-acid chain; its full sequence is Gamma conglutin 1 (452 aa).

The first 33 residues, methionine 1–leucine 33, serve as a signal peptide directing secretion. Positions histidine 61–asparagine 432 constitute a Peptidase A1 domain. 5 disulfides stabilise this stretch: cysteine 89–cysteine 179, cysteine 103–cysteine 116, cysteine 108–cysteine 134, cysteine 119–cysteine 129, and cysteine 353–cysteine 394. Residue asparagine 131 is glycosylated (N-linked (GlcNAc...) asparagine).

This sequence belongs to the peptidase A1 family. In terms of assembly, two-subunit monomeric unit made of alpha and beta subunits coupled by disulfide bonds (at pH 4.5 and under non-reducing conditions). Monomeric alpha and beta subunits in reducing conditions. Can also form oligomers including dimer, tetramer and cyclic hexamer (trimer of dimers) (at pH &gt; 5.5). Component of globulins complexes which accumulate in seeds. Interacts with flavonoids (e.g. apigenin glucosides) present in globulins complexes. Glycosylated on alpha chain at Asn-131; identified N-glycans bound are Man(2)(Xyl)(Fuc)GlcNAc(2), Man(3)(Xyl)(Fuc)GlcNAc(2), GlcNAcMan(3)(Xyl)(Fuc)GlcNAc(2) and GlcNAc(2)Man(3)(Xyl)(Fuc)GlcNAc(2). In terms of tissue distribution, expressed in developing seeds and in the young roots and cotyledons of germinating seeds and young seedlings.

It localises to the secreted. Its subcellular location is the extracellular space. Its function is as follows. Sulfur-rich seed storage protein that remains undegraded at germination. The uncleaved form exhibits some inhibitory activity against GH11 xylanase from T.longibrachiatum, more at pH 7 than at pH 5.3, but not against GH12 xyloglucan-specific endoglucanase (XEG) from A.aculeatus. Binds to model phospholipid membranes containing dimyristoyl phosphatidylglycerol (DMPG), dioleoyl phosphatidic acid (DOPA) or mixture of dimyristoyl phosphatidylcholine and dimyristoyl phosphatidylglycerol (DMPC:DMPG), or mixture of dioleoyl phosphatidic acid and dioleoyl phosphatidylcholine (DOPC:DOPA). This is Gamma conglutin 1 from Lupinus albus (White lupine).